A 212-amino-acid chain; its full sequence is Translation initiation factor IF-3 (212 aa).

Belongs to the IF-3 family. In terms of assembly, monomer.

The protein localises to the cytoplasm. Functionally, IF-3 binds to the 30S ribosomal subunit and shifts the equilibrium between 70S ribosomes and their 50S and 30S subunits in favor of the free subunits, thus enhancing the availability of 30S subunits on which protein synthesis initiation begins. The sequence is that of Translation initiation factor IF-3 from Synechococcus sp. (strain CC9311).